The sequence spans 47 residues: PhoP/PhoQ regulator MgrB (47 aa).

Residues 6–26 form a helical membrane-spanning segment; it reads WVVLGIVVVVCLLLWAQVFNI.

It belongs to the MgrB family. May form homooligomers. Probably interacts with the periplasmic domain of PhoQ.

It localises to the cell inner membrane. In terms of biological role, phoP-regulated transcription is redox-sensitive, being activated when the periplasm becomes more reducing. MgrB acts between DsbA/DsbB and PhoP/PhoQ in this pathway. Represses PhoP/PhoQ signaling, possibly by binding to the periplasmic domain of PhoQ, altering its activity and that of downstream effector PhoP. This Salmonella agona (strain SL483) protein is PhoP/PhoQ regulator MgrB.